A 145-amino-acid chain; its full sequence is MSEFVKPYNNDPFVGNLSTPVTTSTATKLYLGNLPIYRKGLSPLLRGLEIGMAHGYFLIGPFYILGPLRNSPNALLVGLFSAFGLILILTLGLTIYGLASFQGTEGGENLESAKGWRNFTSGFSIGAFGGASVAYVLLDNISFFA.

A run of 3 helical transmembrane segments spans residues 48–68 (LEIGMAHGYFLIGPFYILGPL), 75–95 (LLVGLFSAFGLILILTLGLTI), and 125–145 (IGAFGGASVAYVLLDNISFFA).

This sequence belongs to the PsaL family.

It localises to the plastid. The protein localises to the chloroplast thylakoid membrane. The sequence is that of Photosystem I reaction center subunit XI from Emiliania huxleyi (Coccolithophore).